Reading from the N-terminus, the 163-residue chain is MELPAVNLKAIVFTHWLLTVFACMIDWLPKAYGLANITILAMGVWAIAQRDSIDAIFMFLIGLLLTILTDILLFALYFTEAEKASESGPLRDLFRFSSGMGIFSLLLKPLSCFFMYHMYRERGGEYFVNLGFITLSRDRSSYQSIEHMDPPADQDNKLPSRTY.

Topologically, residues 1-28 (MELPAVNLKAIVFTHWLLTVFACMIDWL) are extracellular. A helical membrane pass occupies residues 29 to 49 (PKAYGLANITILAMGVWAIAQ). The Cytoplasmic portion of the chain corresponds to 50–55 (RDSIDA). The helical transmembrane segment at 56-76 (IFMFLIGLLLTILTDILLFAL) threads the bilayer. Topologically, residues 77–95 (YFTEAEKASESGPLRDLFR) are extracellular. A helical transmembrane segment spans residues 96–116 (FSSGMGIFSLLLKPLSCFFMY). Residues 117–163 (HMYRERGGEYFVNLGFITLSRDRSSYQSIEHMDPPADQDNKLPSRTY) lie on the Cytoplasmic side of the membrane.

Its subcellular location is the membrane. Its function is as follows. Appears to be a negative regulator of angiotensin II type I receptor-mediated signaling. The polypeptide is Type-1 angiotensin II receptor-associated protein-like (agtrap) (Xenopus tropicalis (Western clawed frog)).